The sequence spans 296 residues: Probable endonuclease 4 (296 aa).

9 residues coordinate Zn(2+): histidine 68, histidine 109, glutamate 144, aspartate 178, histidine 181, histidine 213, aspartate 226, histidine 228, and glutamate 258.

This sequence belongs to the AP endonuclease 2 family. Zn(2+) is required as a cofactor.

The catalysed reaction is Endonucleolytic cleavage to 5'-phosphooligonucleotide end-products.. Endonuclease IV plays a role in DNA repair. It cleaves phosphodiester bonds at apurinic or apyrimidinic (AP) sites, generating a 3'-hydroxyl group and a 5'-terminal sugar phosphate. This chain is Probable endonuclease 4, found in Staphylococcus epidermidis (strain ATCC 35984 / DSM 28319 / BCRC 17069 / CCUG 31568 / BM 3577 / RP62A).